Reading from the N-terminus, the 232-residue chain is Putative membrane protein ORF8 (232 aa).

Residues 71–84 (GSSAASIPSAPTPD) are compositionally biased toward low complexity. The disordered stretch occupies residues 71–121 (GSSAASIPSAPTPDATRESPTGEPHRDRALSTETPTPEPSRDGGSTPEVLH). Helical transmembrane passes span 166-182 (VFAR…GSVA) and 195-211 (LVVT…WVIV).

It is found in the membrane. The polypeptide is Putative membrane protein ORF8 (ORF8) (Ictalurid herpesvirus 1 (strain Auburn) (IcHV-1)).